A 117-amino-acid chain; its full sequence is Large ribosomal subunit protein uL18 (117 aa).

It belongs to the universal ribosomal protein uL18 family. Part of the 50S ribosomal subunit; part of the 5S rRNA/L5/L18/L25 subcomplex. Contacts the 5S and 23S rRNAs.

This is one of the proteins that bind and probably mediate the attachment of the 5S RNA into the large ribosomal subunit, where it forms part of the central protuberance. The sequence is that of Large ribosomal subunit protein uL18 from Acidithiobacillus ferrooxidans (strain ATCC 23270 / DSM 14882 / CIP 104768 / NCIMB 8455) (Ferrobacillus ferrooxidans (strain ATCC 23270)).